The following is a 108-amino-acid chain: UPF0060 membrane protein KPN78578_15550 (108 aa).

The next 4 helical transmembrane spans lie at 6-26 (LLFF…WLWL), 29-49 (GATP…VWLL), 61-81 (AAYG…VDGV), and 86-106 (YDWA…AGWG).

The protein belongs to the UPF0060 family.

The protein resides in the cell inner membrane. The polypeptide is UPF0060 membrane protein KPN78578_15550 (Klebsiella pneumoniae subsp. pneumoniae (strain ATCC 700721 / MGH 78578)).